The primary structure comprises 921 residues: Retinoblastoma-associated protein (921 aa).

Positions 1 to 36 (MPPKAPRRAAAAEPPPPPPPPPREDDPAQDSGPEEL) are disordered. A N,N-dimethylproline; by NTM1 modification is found at Pro2. A phosphoserine mark is found at Ser31 and Ser243. 4 positions are modified to phosphothreonine: Thr246, Thr350, Thr364, and Thr367. Residues 341–360 (PIDSFETERTPRKNNPDEEA) form a disordered region. Over residues 346-356 (ETERTPRKNNP) the composition is skewed to basic and acidic residues. A domain A region spans residues 367–573 (TPVRTVMNTI…FDLIKQSKDG (207 aa)). The tract at residues 367–764 (TPVRTVMNTI…QRLKTNILQY (398 aa)) is pocket; binds T and E1A. At Ser561 the chain carries Phosphoserine; by CDK2. The interval 574 to 632 (EGPDNLEPACPLSLPLQGNHTAADMYLSPLRSPKKRTSTTRVNSAANTETQAASAFHTQ) is spacer. A phosphoserine mark is found at Ser601, Ser605, and Ser617. Positions 633 to 764 (KPLKSTSLAL…QRLKTNILQY (132 aa)) are domain B. Residues 756-921 (RLKTNILQYA…SKDVSNKEEK (166 aa)) form an interaction with LIMD1 region. The tract at residues 764 to 921 (YASTRPPTLS…SKDVSNKEEK (158 aa)) is domain; mediates interaction with E4F1. 4 positions are modified to phosphoserine: Ser773, Ser781, Ser788, and Ser800. Lys803 carries the post-translational modification N6-methyllysine; by SMYD2. Ser804 is modified (phosphoserine). Phosphothreonine is present on residues Thr814, Thr816, Thr819, and Thr834. Phosphoserine is present on Ser848. Lys853 is subject to N6-methyllysine; by SMYD2. The Bipartite nuclear localization signal motif lies at 853–869 (KRSAEGGNPPKPLKKLR). An N6-acetyllysine; by PCAF mark is found at Lys866 and Lys867. Residues 872-921 (IEGADEADGSKHLPAESKFQQKLAEMTSTRTRMQKQRMNESKDVSNKEEK) form a disordered region. The segment covering 908-921 (RMNESKDVSNKEEK) has biased composition (basic and acidic residues).

Belongs to the retinoblastoma protein (RB) family. In terms of assembly, the hypophosphorylated form interacts with and sequesters the E2F1 transcription factor, thereby inhibiting E2F1 transcription. Interacts with heterodimeric E2F/DP transcription factor complexes containing TFDP1 and either E2F1/E2F, E2F3, E2F4 or E2F5, or TFDP2 and E2F4. Interacts (when hyperphosphorylated and hypophosphorylated) with PKP3; the interaction inhibits RB1 interaction with and repression of the transcription factor E2F1, potentially via sequestering RB1 to the cytoplasm. The unphosphorylated form interacts with EID1, ARID3B, KDM5A, SUV39H1, MJD2A/JHDM3A and THOC1. Interacts with the N-terminal domain of TAF1. Interacts with SNW1, ATAD5, AATF, DNMT1, LIN9, LMNA, KMT5B, KMT5C, PELP1, UHRF2, TMPO-alpha and USP4. Interacts with GRIP1 and UBR4. Interacts with ARID4A and KDM5B. Interacts with E4F1 and LIMD1. Interacts with SMARCA4/BRG1 and HDAC1. Interacts with USP4. Interacts (when methylated at Lys-853) with L3MBTL1. Binds to CDK1 and CDK2. Interacts with CHEK2; phosphorylates RB1. Interacts with PRMT2. Interacts with CEBPA. P-TEFB complex interacts with RB1; promotes phosphorylation of RB1. Interacts with RBBP9; the interaction disrupts RB1 binding to E2F1. Interacts with KAT2B/PCAF and EP300/P300. Interacts with PAX5. Interacts (phosphorylated and unphosphorylated) with BLCAP. May interact with NDC80. As to quaternary structure, (Microbial infection) Interacts with adenovirus E1a protein. (Microbial infection) Interacts with SV40 large T antigen. Post-translationally, phosphorylated. Phosphorylated by CDK6 and CDK4, and subsequently by CDK2 at Ser-561 in G1, thereby releasing E2F1 which is then able to activate cell growth. Dephosphorylated at the late M phase. Phosphorylation of threonine residues in domain C promotes interaction between the C-terminal domain C and the Pocket domain, and thereby inhibits interactions with heterodimeric E2F/DP transcription factor complexes. Dephosphorylated at Ser-788 by calcineruin upon calcium stimulation. CDK3/cyclin-C-mediated phosphorylation at Ser-800 and Ser-804 is required for G0-G1 transition. Phosphorylated by CDK1 and CDK2 upon TGFB1-mediated apoptosis. In terms of processing, monomethylation at Lys-803 by SMYD2 enhances phosphorylation at Ser-800 and Ser-804, and promotes cell cycle progression. Monomethylation at Lys-853 by SMYD2 promotes interaction with L3MBTL1. N-terminus is methylated by METTL11A/NTM1. Acetylated in the skin. Acetylation at Lys-866 and Lys-867 regulates subcellular localization during keratinocytes differentiation. As to expression, expressed in the cell nuclei of renal tubules, hepatocytes and skeletal muscles. Expressed in skin (at protein level).

It localises to the nucleus. The protein localises to the cytoplasm. Functionally, tumor suppressor that is a key regulator of the G1/S transition of the cell cycle. The hypophosphorylated form binds transcription regulators of the E2F family, preventing transcription of E2F-responsive genes. Both physically blocks E2Fs transactivating domain and recruits chromatin-modifying enzymes that actively repress transcription. Cyclin and CDK-dependent phosphorylation of RB1 induces its dissociation from E2Fs, thereby activating transcription of E2F responsive genes and triggering entry into S phase. RB1 also promotes the G0-G1 transition upon phosphorylation and activation by CDK3/cyclin-C. Directly involved in heterochromatin formation by maintaining overall chromatin structure and, in particular, that of constitutive heterochromatin by stabilizing histone methylation. Recruits and targets histone methyltransferases SUV39H1, KMT5B and KMT5C, leading to epigenetic transcriptional repression. Controls histone H4 'Lys-20' trimethylation. Inhibits the intrinsic kinase activity of TAF1. Mediates transcriptional repression by SMARCA4/BRG1 by recruiting a histone deacetylase (HDAC) complex to the c-FOS promoter. In resting neurons, transcription of the c-FOS promoter is inhibited by BRG1-dependent recruitment of a phospho-RB1-HDAC1 repressor complex. Upon calcium influx, RB1 is dephosphorylated by calcineurin, which leads to release of the repressor complex. The sequence is that of Retinoblastoma-associated protein (Rb1) from Mus musculus (Mouse).